A 352-amino-acid chain; its full sequence is Protein AMBP (352 aa).

The N-terminal stretch at 1 to 19 is a signal peptide; that stretch reads MRSLSGLLLLLTACLAVNA. Cys53 and Lys111 together coordinate 3-hydroxy-L-kynurenine. A disulfide bridge connects residues Cys91 and Cys188. Asn115 is a glycosylation site (N-linked (GlcNAc...) asparagine). 3-hydroxy-L-kynurenine-binding residues include Lys137 and Lys149. O-linked (Xyl...) (chondroitin sulfate) serine glycosylation occurs at Ser215. N-linked (GlcNAc...) asparagine glycans are attached at residues Asn223 and Asn250. 6 cysteine pairs are disulfide-bonded: Cys231–Cys281, Cys240–Cys264, Cys256–Cys277, Cys287–Cys337, Cys296–Cys320, and Cys312–Cys333. BPTI/Kunitz inhibitor domains are found at residues 231 to 281 and 287 to 337; these read CQLD…LQTC and CNLP…KEYC.

It in the N-terminal section; belongs to the calycin superfamily. Lipocalin family. Monomer. Homodimer. In plasma, it occurs as a monomer or dimer and in covalently-linked complexes with immunoglobulin A (IgA), ALB/albumin and F2/prothrombin. Chromophore-bound alpha-1-microglobulin interacts with the constant region of immunoglobulin A. Chromophore-bound alpha-1-microglobulin interacts with ALB with molar ratio 2:1 and 1:1; this interaction does not prevent fatty acid binding to ALB. Interacts with F2/prothrombin (via N-terminus) with molar ratio 2:1 and 1:1; this interaction does not prevent the activation of prothrombin to thrombin. Interacts with NDUFAB1, a subunit of mitochondrial complex I. Interacts with FN1. As to quaternary structure, I-alpha-I plasma protease inhibitors are assembled from one or two heavy chains (HC) and one light chain, bikunin. Inter-alpha-inhibitor (I-alpha-I) is composed of ITIH1/HC1, ITIH2/HC2 and bikunin, and pre-alpha-inhibitor (P-alpha-I) of ITIH3/HC3 and bikunin. Interacts with TNFAIP6 (via Link domain). In terms of assembly, monomer. Also occurs as a complex with tryptase in mast cells. Post-translationally, the precursor is proteolytically processed into separately functioning proteins. In terms of processing, 3-hydroxykynurenine, an oxidized tryptophan metabolite that is common in biological fluids, reacts with Cys-53, Lys-111, Lys-137, and Lys-149 to form heterogeneous polycyclic chromophores including hydroxanthommatin. The reaction by alpha-1-microglobulin is autocatalytic; the human protein forms chromophore even when expressed in insect and bacterial cells. The chromophore can react with accessible cysteines forming non-reducible thioether cross-links with other molecules of alpha-1-microglobulin or with other proteins such as Ig alpha-1 chain C region 'Cys-352'. Heavy chains are interlinked with bikunin via a chondroitin 4-sulfate bridge to the C-terminal aspartate. Post-translationally, proteolytically cleaved by PRSS3 at Kunitz domain 2. Expressed by the liver and secreted in plasma.

It is found in the secreted. The protein resides in the endoplasmic reticulum. It localises to the cytoplasm. Its subcellular location is the cytosol. The protein localises to the cell membrane. It is found in the nucleus membrane. The protein resides in the mitochondrion inner membrane. It localises to the extracellular space. Its subcellular location is the extracellular matrix. Its function is as follows. Antioxidant and tissue repair protein with reductase, heme-binding and radical-scavenging activities. Removes and protects against harmful oxidants and repairs macromolecules in intravascular and extravascular spaces and in intracellular compartments. Intravascularly, plays a regulatory role in red cell homeostasis by preventing heme- and reactive oxygen species-induced cell damage. Binds and degrades free heme to protect fetal and adult red blood cells from hemolysis. Reduces extracellular methemoglobin, a Fe3+ (ferric) form of hemoglobin that cannot bind oxygen, back to the Fe2+ (ferrous) form deoxyhemoglobin, which has oxygen-carrying potential. Upon acute inflammation, inhibits oxidation of low-density lipoprotein particles by MPO and limits vascular damage. Extravascularly, protects from oxidation products formed on extracellular matrix structures and cell membranes. Catalyzes the reduction of carbonyl groups on oxidized collagen fibers and preserves cellular and extracellular matrix ultrastructures. Importantly, counteracts the oxidative damage at blood-placenta interface, preventing leakage of free fetal hemoglobin into the maternal circulation. Intracellularly, has a role in maintaining mitochondrial redox homeostasis. Bound to complex I of the respiratory chain of mitochondria, may scavenge free radicals and preserve mitochondrial ATP synthesis. Protects renal tubule epithelial cells from heme-induced oxidative damage to mitochondria. Reduces cytochrome c from Fe3+ (ferric) to the Fe2+ (ferrous) state through formation of superoxide anion radicals in the presence of ascorbate or NADH/NADPH electron donor cofactors, ascorbate being the preferred cofactor. Has a chaperone role in facilitating the correct folding of bikunin in the endoplasmic reticulum compartment. Functionally, kunitz-type serine protease inhibitor and structural component of extracellular matrix with a role in extracellular space remodeling and cell adhesion. Among others, has antiprotease activity toward kallikrein, a protease involved in airway inflammation; inhibits GZMK/granzyme, a granule-stored serine protease involved in NK and T cell cytotoxic responses; and inhibits PLG/plasmin, a protease required for activation of matrix metalloproteinases. As part of I-alpha-I complex, provides for the heavy chains to be transferred from I-alpha-I complex to hyaluronan in the presence of TNFAIP6, in a dynamic process that releases free bikunin and remodels extracellular matrix proteoglycan structures. Free bikunin, but not its heavy chain-bound form, acts as a potent protease inhibitor in airway secretions. Part of hyaluronan-rich extracellular matrix that surrounds oocyte during cumulus oophorus expansion, an indispensable process for proper ovulation. Also inhibits calcium oxalate crystallization. In terms of biological role, kunitz-type serine protease inhibitor. Has high catalytic efficiency for F10/blood coagulation factor Xa and may act as an anticoagulant by inhibiting prothrombin activation. Inhibits trypsin and mast cell CMA1/chymase and tryptase proteases. The chain is Protein AMBP (AMBP) from Bos taurus (Bovine).